The following is a 322-amino-acid chain: Ribonucleoside-diphosphate reductase subunit beta nrdF1 (322 aa).

Asp-70, Glu-101, and His-104 together coordinate Fe cation. Tyr-108 is an active-site residue. 3 residues coordinate Fe cation: Glu-161, Glu-195, and His-198.

Belongs to the ribonucleoside diphosphate reductase small chain family. Tetramer of two alpha and two beta subunits. Fe cation is required as a cofactor.

It catalyses the reaction a 2'-deoxyribonucleoside 5'-diphosphate + [thioredoxin]-disulfide + H2O = a ribonucleoside 5'-diphosphate + [thioredoxin]-dithiol. Provides the precursors necessary for DNA synthesis. Catalyzes the biosynthesis of deoxyribonucleotides from the corresponding ribonucleotides. The chain is Ribonucleoside-diphosphate reductase subunit beta nrdF1 (nrdF1) from Mycobacterium tuberculosis (strain CDC 1551 / Oshkosh).